Consider the following 464-residue polypeptide: Probable mannosyltransferase KTR4 (464 aa).

The Cytoplasmic segment spans residues 1 to 11 (MRFLSKRILKP). The helical; Signal-anchor for type II membrane protein transmembrane segment at 12-32 (VLSVIILISIAVTVVLYFLTA) threads the bilayer. The tract at residues 33-130 (NENYLQAVKD…NLVRSGDPLA (98 aa)) is stem region. Over 33–464 (NENYLQAVKD…SMSEEELEMY (432 aa)) the chain is Lumenal. The tract at residues 131–464 (GKAKGTILSL…SMSEEELEMY (334 aa)) is catalytic. Catalysis depends on Glu352, which acts as the Nucleophile.

Belongs to the glycosyltransferase 15 family.

The protein resides in the membrane. Possible glycosyltransferase that transfers an alpha-D-mannosyl residue from GDP-mannose into lipid-linked oligosaccharide, forming an alpha-(1-&gt;2)-D-mannosyl-D-mannose linkage. The polypeptide is Probable mannosyltransferase KTR4 (KTR4) (Saccharomyces cerevisiae (strain ATCC 204508 / S288c) (Baker's yeast)).